The primary structure comprises 101 residues: Small ribosomal subunit protein uS14 (101 aa).

The protein belongs to the universal ribosomal protein uS14 family. As to quaternary structure, part of the 30S ribosomal subunit. Contacts proteins S3 and S10.

Its function is as follows. Binds 16S rRNA, required for the assembly of 30S particles and may also be responsible for determining the conformation of the 16S rRNA at the A site. This Pseudomonas putida (strain ATCC 47054 / DSM 6125 / CFBP 8728 / NCIMB 11950 / KT2440) protein is Small ribosomal subunit protein uS14.